Here is a 63-residue protein sequence, read N- to C-terminus: Large ribosomal subunit protein uL29 (63 aa).

Belongs to the universal ribosomal protein uL29 family.

This chain is Large ribosomal subunit protein uL29, found in Flavobacterium johnsoniae (strain ATCC 17061 / DSM 2064 / JCM 8514 / BCRC 14874 / CCUG 350202 / NBRC 14942 / NCIMB 11054 / UW101) (Cytophaga johnsonae).